Here is a 695-residue protein sequence, read N- to C-terminus: Polyribonucleotide nucleotidyltransferase (695 aa).

Positions 486 and 492 each coordinate Mg(2+). The region spanning 553–612 is the KH domain; that stretch reads PRIETMQINTSKIATVIGPGGKQIRQIIERSGAQVDINDDGVINIAASTQESINKAKELI. The region spanning 622–690 is the S1 motif domain; the sequence is GKVYNGRVTS…EKGQLKLSHK (69 aa).

The protein belongs to the polyribonucleotide nucleotidyltransferase family. Requires Mg(2+) as cofactor.

Its subcellular location is the cytoplasm. It carries out the reaction RNA(n+1) + phosphate = RNA(n) + a ribonucleoside 5'-diphosphate. Functionally, involved in mRNA degradation. Catalyzes the phosphorolysis of single-stranded polyribonucleotides processively in the 3'- to 5'-direction. In Chlamydia trachomatis serovar L2 (strain ATCC VR-902B / DSM 19102 / 434/Bu), this protein is Polyribonucleotide nucleotidyltransferase.